An 880-amino-acid polypeptide reads, in one-letter code: Leucine--tRNA ligase (880 aa).

Positions 49 to 59 (PYPSGRIHMGH) match the 'HIGH' region motif. Positions 638–642 (KMSKS) match the 'KMSKS' region motif. Lys641 is a binding site for ATP.

This sequence belongs to the class-I aminoacyl-tRNA synthetase family.

Its subcellular location is the cytoplasm. The enzyme catalyses tRNA(Leu) + L-leucine + ATP = L-leucyl-tRNA(Leu) + AMP + diphosphate. This Bartonella quintana (strain Toulouse) (Rochalimaea quintana) protein is Leucine--tRNA ligase.